The following is a 468-amino-acid chain: Phosphomethylpyrimidine synthase (468 aa).

Substrate is bound by residues Asn-82, Met-111, Tyr-141, His-177, 197 to 199, 238 to 241, and Glu-277; these read SRG and DSLR. His-281 lines the Zn(2+) pocket. Tyr-304 lines the substrate pocket. His-345 is a binding site for Zn(2+). [4Fe-4S] cluster contacts are provided by Cys-425, Cys-428, and Cys-433.

Belongs to the ThiC family. [4Fe-4S] cluster is required as a cofactor.

It catalyses the reaction 5-amino-1-(5-phospho-beta-D-ribosyl)imidazole + S-adenosyl-L-methionine = 4-amino-2-methyl-5-(phosphooxymethyl)pyrimidine + CO + 5'-deoxyadenosine + formate + L-methionine + 3 H(+). The protein operates within cofactor biosynthesis; thiamine diphosphate biosynthesis. Its function is as follows. Catalyzes the synthesis of the hydroxymethylpyrimidine phosphate (HMP-P) moiety of thiamine from aminoimidazole ribotide (AIR) in a radical S-adenosyl-L-methionine (SAM)-dependent reaction. In Prochlorococcus marinus (strain SARG / CCMP1375 / SS120), this protein is Phosphomethylpyrimidine synthase.